A 1088-amino-acid chain; its full sequence is TBC1 domain family member 31 (1088 aa).

Residues 1-20 (MQTTDLGNKESGKIWHRKPN) form a disordered region. WD repeat units lie at residues 33–74 (HVDA…LNRN), 75–116 (RFDL…TGAK), 117–157 (ELVS…LDTF), 158–200 (QRKR…SDTL), 201–248 (ACKY…SKQL), 249–296 (FRII…IQTC), and 297–334 (KLVFDIGSHDNGIVTSSVSPNGRYITSVMENGSLNIYS). A disordered region spans residues 356–381 (SKDKDSTGNKSGVSGASQEKVRVSSG). Residues 363–372 (GNKSGVSGAS) show a composition bias toward polar residues. In terms of domain architecture, Rab-GAP TBC spans 432 to 607 (EYPAKYRMFI…RLFDNVFSNH (176 aa)). Coiled coils occupy residues 736–903 (QQQE…VETD) and 1048–1076 (RGELENRERALISEVRELRQKLATQARRK).

It localises to the cytoplasm. Its subcellular location is the cytoskeleton. The protein localises to the microtubule organizing center. The protein resides in the centrosome. It is found in the centriolar satellite. It localises to the cilium basal body. In terms of biological role, molecular adapter which is involved in cilium biogenesis. Part of a functional complex including OFD1 a centriolar protein involved in cilium assembly. Could regulate the cAMP-dependent phosphorylation of OFD1, and its subsequent ubiquitination by PJA2 which ultimately leads to its proteasomal degradation. The polypeptide is TBC1 domain family member 31 (Xenopus tropicalis (Western clawed frog)).